The sequence spans 317 residues: Lipoyl synthase (317 aa).

Residues Cys-59, Cys-64, Cys-70, Cys-85, Cys-89, Cys-92, and Ser-298 each coordinate [4Fe-4S] cluster. Residues 71–287 enclose the Radical SAM core domain; the sequence is WSQRHASFMI…AKIGKAKGFL (217 aa).

It belongs to the radical SAM superfamily. Lipoyl synthase family. Requires [4Fe-4S] cluster as cofactor.

The protein localises to the cytoplasm. The catalysed reaction is [[Fe-S] cluster scaffold protein carrying a second [4Fe-4S](2+) cluster] + N(6)-octanoyl-L-lysyl-[protein] + 2 oxidized [2Fe-2S]-[ferredoxin] + 2 S-adenosyl-L-methionine + 4 H(+) = [[Fe-S] cluster scaffold protein] + N(6)-[(R)-dihydrolipoyl]-L-lysyl-[protein] + 4 Fe(3+) + 2 hydrogen sulfide + 2 5'-deoxyadenosine + 2 L-methionine + 2 reduced [2Fe-2S]-[ferredoxin]. It participates in protein modification; protein lipoylation via endogenous pathway; protein N(6)-(lipoyl)lysine from octanoyl-[acyl-carrier-protein]: step 2/2. Functionally, catalyzes the radical-mediated insertion of two sulfur atoms into the C-6 and C-8 positions of the octanoyl moiety bound to the lipoyl domains of lipoate-dependent enzymes, thereby converting the octanoylated domains into lipoylated derivatives. This chain is Lipoyl synthase, found in Bartonella bacilliformis (strain ATCC 35685 / KC583 / Herrer 020/F12,63).